Consider the following 932-residue polypeptide: Potassium voltage-gated channel subfamily KQT member 5 (932 aa).

Topologically, residues 1 to 125 (MPRHHAGGEE…YNVLERPRGW (125 aa)) are cytoplasmic. The residue at position 88 (Ser88) is a Phosphoserine. The helical transmembrane segment at 126 to 146 (AFIYHAFVFLLVFGCLILSVF) threads the bilayer. Over 147–156 (STIPEHTKLA) the chain is Extracellular. A helical membrane pass occupies residues 157-177 (SSCLLILEFVMIVVFGLEFII). Residues 178-200 (RIWSAGCCCRYRGWQGRLRFARK) lie on the Cytoplasmic side of the membrane. Residues 201-221 (PFCVIDTIVLIASIAVVSAKT) form a helical membrane-spanning segment. The Extracellular portion of the chain corresponds to 222 to 229 (QGNIFATS). The helical; Voltage-sensor transmembrane segment at 230–252 (ALRSLRFLQILRMVRMDRRGGTW) threads the bilayer. Residues Arg248 and Lys264 each coordinate a 1,2-diacyl-sn-glycero-3-phospho-(1D-myo-inositol-4,5-bisphosphate). Topologically, residues 253-266 (KLLGSVVYAHSKEL) are cytoplasmic. The helical transmembrane segment at 267–287 (ITAWYIGFLVLIFSSFLVYLV) threads the bilayer. The Extracellular segment spans residues 288–298 (EKDANKEFSTY). Positions 299–319 (ADALWWGTITLTTIGYGDKTP) form an intramembrane region, pore-forming. The Extracellular portion of the chain corresponds to 320–325 (LTWLGR). Residues 326–346 (LLSAGFALLGISFFALPAGIL) form a helical membrane-spanning segment. At 347-932 (GSGFALKVQE…ALSLPHVKLK (586 aa)) the chain is on the cytoplasmic side. Position 361 (Lys361) interacts with a 1,2-diacyl-sn-glycero-3-phospho-(1D-myo-inositol-4,5-bisphosphate). An interaction with CALM region spans residues 370 to 378 (AANLIQCVW). The segment at 404-465 (SPTKKEQGEA…GSPTKVQKSW (62 aa)) is disordered. A compositionally biased stretch (polar residues) spans 431–440 (RGQSIKSRQA). Phosphoserine is present on Ser447. Residues 521 to 528 (VIRAIRIM) are interaction with CALM. Positions 655–678 (SDYQSPVDSKDLSGSAQNSGCLSR) are disordered. At Ser831 the chain carries Phosphoserine. Acidic residues predominate over residues 876 to 885 (VGPEETETDT). A disordered region spans residues 876–919 (VGPEETETDTFDAAPQPAREAAFASDSLRTGRSRSSQSICKAGE). A compositionally biased stretch (low complexity) spans 888–899 (AAPQPAREAAFA). Residues 902–914 (SLRTGRSRSSQSI) are compositionally biased toward polar residues.

This sequence belongs to the potassium channel family. KQT (TC 1.A.1.15) subfamily. Kv7.5/KCNQ5 sub-subfamily. As to quaternary structure, homotetramer; forms a functional homotetrameric channel resulting in the expression of a small M-current. Heterotetramer with KCNQ3; forms heterotetrameric M-channel responsible for the native M-current. Heterotetramer with KCNQ1; forms a functional voltage-gated potassium channel. Interacts (via C-terminus) with calmodulin/CALM1; forms a heterooctameric structure (with 4:4 KCNQ1:CALM stoichiometry); the interaction is calcium-independent, constitutive and participates in the channel function. In terms of tissue distribution, strongly expressed in brain and skeletal muscle. In brain, expressed in cerebral cortex, occipital pole, frontal lobe and temporal lobe. Lower levels in hippocampus and putamen. Low to undetectable levels in medulla, cerebellum and thalamus.

It is found in the cell membrane. It carries out the reaction K(+)(in) = K(+)(out). Its activity is regulated as follows. Phosphatidylinositol-4,5-bisphosphate (PIP2) is essential to activate KCNQ5 channel by inducing the coupling of the voltage-sensing domain (VSD) and the pore-forming domain (PD). Calcium suppresses KCNQ5 channel current through calcium-bound CALM C-terminus. Therefore CALM acts as calcium sensor that controls channel activity. Activated by niflumic acid and the anticonvulsant retigabine. Inhibited by barium, linopirdine, XE991 and tetraethylammonium (as homomer). Insensitive to tetraethylammonium in KCNQ3-KCNQ5 heteromers. Pore-forming subunit of the voltage-gated potassium (Kv) channel broadly expressed in brain and involved in the regulation of neuronal excitability. Associates with KCNQ3/Kv7.3 pore-forming subunit to form a potassium channel which contributes to M-type current, a slowly activating and deactivating potassium conductance which plays a critical role in determining the subthreshold electrical excitability of neurons. Contributes, with other potassium channels, to the molecular diversity of a heterogeneous population of M-channels, varying in kinetic and pharmacological properties, which underlie this physiologically important current. Also forms a functional channel with KCNQ1/Kv7.1 subunit that may contribute to vasoconstriction and hypertension. Channel may be selectively permeable in vitro to other cations besides potassium, in decreasing order of affinity K(+) = Rb(+) &gt; Cs(+) &gt; Na(+). Similar to the native M-channel, KCNQ3-KCNQ5 potassium channel is suppressed by activation of the muscarinic acetylcholine receptor CHRM1. The sequence is that of Potassium voltage-gated channel subfamily KQT member 5 from Homo sapiens (Human).